An 835-amino-acid polypeptide reads, in one-letter code: Protein translocase subunit SecA (835 aa).

ATP is bound by residues Q85, 103 to 107, and D492; that span reads GEGKT. Zn(2+) is bound by residues C819, C821, C830, and C831.

The protein belongs to the SecA family. Monomer and homodimer. Part of the essential Sec protein translocation apparatus which comprises SecA, SecYEG and auxiliary proteins SecDF. Other proteins may also be involved. It depends on Zn(2+) as a cofactor.

The protein resides in the cell membrane. It is found in the cytoplasm. The enzyme catalyses ATP + H2O + cellular proteinSide 1 = ADP + phosphate + cellular proteinSide 2.. Functionally, part of the Sec protein translocase complex. Interacts with the SecYEG preprotein conducting channel. Has a central role in coupling the hydrolysis of ATP to the transfer of proteins into and across the cell membrane, serving as an ATP-driven molecular motor driving the stepwise translocation of polypeptide chains across the membrane. This Clostridium botulinum (strain Kyoto / Type A2) protein is Protein translocase subunit SecA.